The following is a 168-amino-acid chain: MASGVMVSDDVIKVFNEMKVRHQLSPEDAKKRKKAVVFCLSDDKKTIILEPGKEILQGDIGCNVEDPYKTFVKMLPRNDCRYALYDALYETKETKKEDLVFVFWAPEEASLKSKMIYASSKDAIKKRLPGIKHEWQINTYEDVNDPCNLADKLGGNTVVSLEGKSVRS.

The residue at position 2 (alanine 2) is an N-acetylalanine. An ADF-H domain is found at 4–153; sequence GVMVSDDVIK…NDPCNLADKL (150 aa). Positions 30–34 match the Nuclear localization signal motif; it reads KKRKK.

Belongs to the actin-binding proteins ADF family. Post-translationally, inactive when phosphorylated. Phosphorylation levels vary during development. Oocytes contain only the phosphorylated form, and 80-95% of cfl1 protein is phosphorylated in unfertilized eggs. Rapid dephosphorylation occurs within 30 minutes after fertilization. Phosphorylation levels increase again between the morula and blastula stages (5-8 hpf) and then decrease again as gastrulation approaches. Dephosphorylated by pdxp. In terms of tissue distribution, expressed diffusely in both animal and vegetal hemispheres of the oocyte. During cleavage, expression accumulates around the cleavage furrow, along the vegetal membrane, and later in the midbody. Strongly expressed in the animal hemisphere during blastula stages, with most cells showing expression by gastrulation. By stage 17, expression is highest in cells of the developing neuroectoderm, and at stage 24 the notochord, neural tube, neural crest, somites and some cells of the archenteron show high expression. By stage 35, expression has declined in the notochord, but remains in the neural tube, epidermis and a layer of cells in the archenteron. Also highly expressed in the retina and neuronal cell bodies at the base of the cement gland but not the cement gland itself. At stage 38, expression is widespread, being highest in the nervous system and retina. In the adult, expression is high in the brain, heart, oocyte, stomach, and low in skeletal muscle.

The protein resides in the nucleus matrix. Its subcellular location is the cytoplasm. It localises to the cytoskeleton. The protein localises to the cell cortex. It is found in the membrane. Its function is as follows. May play a role in the regulation of cell morphology and cytoskeletal organization. Binds to F-actin and exhibits pH-sensitive F-actin depolymerizing activity. Required for formation of the cleavage furrow during cytokinesis. The protein is Cofilin-1-A (cfl1-a) of Xenopus laevis (African clawed frog).